The chain runs to 275 residues: LexA repressor (275 aa).

The disordered stretch occupies residues methionine 1–threonine 50. A DNA-binding region (H-T-H motif) is located at residues methionine 73 to methionine 93. The interval arginine 114–proline 151 is disordered. Active-site for autocatalytic cleavage activity residues include serine 199 and lysine 236.

Belongs to the peptidase S24 family. Homodimer.

It catalyses the reaction Hydrolysis of Ala-|-Gly bond in repressor LexA.. Its function is as follows. Represses a number of genes involved in the response to DNA damage (SOS response), including recA and lexA. In the presence of single-stranded DNA, RecA interacts with LexA causing an autocatalytic cleavage which disrupts the DNA-binding part of LexA, leading to derepression of the SOS regulon and eventually DNA repair. In Acidothermus cellulolyticus (strain ATCC 43068 / DSM 8971 / 11B), this protein is LexA repressor.